The sequence spans 155 residues: MQGLVLQLTRVGFLLLLWLFIWSVLRILRTDIYAPTGAVMVRRGLALRGSLLPNRQRRHVARQLVVTEGALAGTRITLGNQPVLIGRADDSTLVLTDDYASTRHARLSPRGSEWYVEDLGSTNGTYLDRAKVTTAVKVPIGAPVRIGKTVIELRP.

The helical transmembrane segment at 6–28 threads the bilayer; sequence LQLTRVGFLLLLWLFIWSVLRIL. Phosphothreonine is present on Thr36. Positions 83–132 constitute an FHA domain; the sequence is VLIGRADDSTLVLTDDYASTRHARLSPRGSEWYVEDLGSTNGTYLDRAKV.

Phosphorylated by PknB. Dephosphorylated by PstP.

The protein localises to the cell membrane. The protein is FHA domain-containing protein FhaB (fhaB) of Mycolicibacterium smegmatis (strain ATCC 700084 / mc(2)155) (Mycobacterium smegmatis).